Consider the following 267-residue polypeptide: Cilia- and flagella-associated protein 300 (267 aa).

The protein belongs to the CFAP300 family. In terms of assembly, interacts with DNAAF2. In terms of tissue distribution, expressed in nasal epithelial cells.

The protein resides in the cytoplasm. It is found in the cytoskeleton. Its subcellular location is the cilium axoneme. Functionally, cilium- and flagellum-specific protein that plays a role in axonemal structure organization and motility. May play a role in outer and inner dynein arm assembly. The protein is Cilia- and flagella-associated protein 300 of Homo sapiens (Human).